A 449-amino-acid chain; its full sequence is VIRF-1 (449 aa).

A disordered region spans residues Met1–Asp60. A DNA-binding region (IRF tryptophan pentad repeat) is located at residues Lys89–Lys195. N6-propionyllysine; by host occurs at positions 406 and 442.

This sequence belongs to the IRF family. In terms of assembly, forms homodimers. Interacts with host IRF3, IRF7, and CREBBP. Interacts with host SYNCRIP. Interacts with host USP7. Interacts (via C-terminus) with host HERC5. Interacts with host GABARAPL1. Interacts with host SIRT6. ISGylated. Post-translationally, propionylated in lysine residues Lys-406 and Lys-442, which is required for effective inhibition of IFN-beta production and antiviral signaling.

The protein resides in the host cytoplasm. Functionally, plays a role in the inhibition of host innate response by repressing the expression of interferon-inducible genes and blocking host IRF1- and IRF3-mediated transcription. Blocks the interaction between host IRF3 and CREBBP. Regulates the host cellular metabolism by increasing glucose uptake, ATP production and lactate secretion through down-regulation of heterogeneous nuclear ribonuclear protein Q1/SYNCRIP. Mechanistically, induces ubiquitination and degradation of SYNCRIP through the ubiquitin-proteasome pathway by recruiting KLHL3/CUL3 ubiquitin ligase complex. Disrupts host TP53 signaling pathway during viral infection by interacting with host USP7 and thereby decreasing the availability of USP7 for deubiquitinating and stabilizing TP53. Plays a role in the global inhibition of protein ISGylation by interacting with host HERC5 leading to its inhibition. Promotes its own propionylation by blocking SIRT6 interaction with ubiquitin-specific peptidase 10/USP10 leading to SIRT6 degradation via a ubiquitin-proteasome pathway. In turn, propionylation is required to block IRF3-CBP/p300 recruitment and to repress the STING DNA sensing pathway. Plays a role in the activation of mitophagy during infection via interaction with the host proteins NIX/BNIP3L, TUFM and GABARAPL1 thereby inhibiting antiviral responses and contributing to productive replication. This is VIRF-1 (vIRF-1) from Homo sapiens (Human).